Here is a 777-residue protein sequence, read N- to C-terminus: MRSFRSSILLVLLSLITVLNATRARSETESKVHIVYLGEKKHHDPEFVTESHHQMLASLLGSKKDADDSMVYSYRHGFSGFAAKLTKSQAKKIADLPEVVHVIPDGFHELATTRTWEYLGLSSANPKNLLNDTNMGDQVIIGVIDTGVWPESESFNDNGVGPIPRKWKGGCESGENFRSTDCNRKLIGAKYFINGFLAENKGFNTTESRDYISARDFDGHGTHVASIAGGSFVPNVSYKGLAGGTLRGGAPRARIAMYKACWFHEELKGVTCSDSDIMKAIDEAIHDGVDVLSISLVGQIPLNSETDIRDEFATGLFHAVAKGIVVVCAGGNDGPAAQTVVNIAPWILTVAATTLDRSFPTPITLGNNKVILGQATYTGPELGLTSLVYPENARNNNETFSGVCESLNLNPNYTMAMKVVLCFTASRTNAAISRAASFVKAAGGLGLIISRNPVYTLSPCNDDFPCVAVDYELGTDILSYIRSTRSPVVKIQRSRTLSGQPVGTKVVNFSSRGPNSMSPAILKPDIAAPGVRILAATSPNDTLNVGGFAMLSGTSMATPVISGVIALLKALHPEWSPAAFRSAIVTTAWRTDPFGEQIFAEGSSRKVSDPFDYGGGIVNPEKAAEPGLIYDMGPQDYILYLCSAGYNDSSISQLVGQITVCSNPKPSVLDVNLPSITIPNLKDEVTLTRTVTNVGLVDSVYKVSVEPPLGVRVVVTPETLVFNSKTISVSFTVRVSTTHKINTGYYFGSLTWTDSVHNVVIPLSVRTQILQNYYDEN.

Residues 1-24 (MRSFRSSILLVLLSLITVLNATRA) form the signal peptide. Residues 25–111 (RSETESKVHI…VIPDGFHELA (87 aa)) constitute a propeptide, removed in mature form. The 78-residue stretch at 32–109 (VHIVYLGEKK…VHVIPDGFHE (78 aa)) folds into the Inhibitor I9 domain. The 510-residue stretch at 115–624 (TWEYLGLSSA…GGIVNPEKAA (510 aa)) folds into the Peptidase S8 domain. Asparagine 131 is a glycosylation site (N-linked (GlcNAc...) asparagine). Aspartate 145 (charge relay system) is an active-site residue. N-linked (GlcNAc...) asparagine glycosylation is present at asparagine 204. The Charge relay system role is filled by histidine 220. N-linked (GlcNAc...) asparagine glycans are attached at residues asparagine 235, asparagine 397, asparagine 412, asparagine 508, and asparagine 540. A PA domain is found at 403–481 (VCESLNLNPN…ELGTDILSYI (79 aa)). The active-site Charge relay system is the serine 555. Asparagine 647 carries an N-linked (GlcNAc...) asparagine glycan.

Belongs to the peptidase S8 family.

The protein resides in the secreted. The protein localises to the extracellular space. It is found in the extracellular matrix. Its function is as follows. Serine protease that plays a role in the control of the establishment of immune priming and systemic induced resistance. This is Subtilisin-like protease SBT3.3 from Arabidopsis thaliana (Mouse-ear cress).